The chain runs to 636 residues: Chaperone protein HtpG (636 aa).

The tract at residues methionine 1–arginine 344 is a; substrate-binding. The interval glutamate 345–glutamine 561 is b. Residues isoleucine 562 to valine 636 are c.

This sequence belongs to the heat shock protein 90 family. As to quaternary structure, homodimer.

The protein resides in the cytoplasm. In terms of biological role, molecular chaperone. Has ATPase activity. This is Chaperone protein HtpG from Pseudomonas fluorescens (strain SBW25).